We begin with the raw amino-acid sequence, 278 residues long: Glucosamine-6-phosphate deaminase (278 aa).

Aspartate 72 functions as the Proton acceptor; for enolization step in the catalytic mechanism. Catalysis depends on aspartate 141, which acts as the For ring-opening step. Catalysis depends on histidine 143, which acts as the Proton acceptor; for ring-opening step. Glutamate 148 acts as the For ring-opening step in catalysis.

Belongs to the glucosamine/galactosamine-6-phosphate isomerase family. In terms of assembly, homohexamer.

It localises to the cytoplasm. It catalyses the reaction alpha-D-glucosamine 6-phosphate + H2O = beta-D-fructose 6-phosphate + NH4(+). It participates in nucleotide-sugar biosynthesis; UDP-N-acetyl-alpha-D-glucosamine biosynthesis; alpha-D-glucosamine 6-phosphate from D-fructose 6-phosphate: step 1/1. Its function is as follows. Catalyzes the reversible conversion of alpha-D-glucosamine 6-phosphate (GlcN-6P) into beta-D-fructose 6-phosphate (Fru-6P) and ammonium ion, a regulatory reaction step in de novo uridine diphosphate-N-acetyl-alpha-D-glucosamine (UDP-GlcNAc) biosynthesis via hexosamine pathway. This Aedes aegypti (Yellowfever mosquito) protein is Glucosamine-6-phosphate deaminase (Gnpda1).